A 280-amino-acid polypeptide reads, in one-letter code: NAD(P)H-quinone oxidoreductase subunit K, chloroplastic (280 aa).

Cysteine 65, cysteine 66, cysteine 130, and cysteine 161 together coordinate [4Fe-4S] cluster. The segment at 257–280 (LLKDWKQSNQKQEQNVKMMKEEEA) is disordered.

It belongs to the complex I 20 kDa subunit family. NDH is composed of at least 16 different subunits, 5 of which are encoded in the nucleus. Requires [4Fe-4S] cluster as cofactor.

It is found in the plastid. It localises to the chloroplast thylakoid membrane. The catalysed reaction is a plastoquinone + NADH + (n+1) H(+)(in) = a plastoquinol + NAD(+) + n H(+)(out). The enzyme catalyses a plastoquinone + NADPH + (n+1) H(+)(in) = a plastoquinol + NADP(+) + n H(+)(out). NDH shuttles electrons from NAD(P)H:plastoquinone, via FMN and iron-sulfur (Fe-S) centers, to quinones in the photosynthetic chain and possibly in a chloroplast respiratory chain. The immediate electron acceptor for the enzyme in this species is believed to be plastoquinone. Couples the redox reaction to proton translocation, and thus conserves the redox energy in a proton gradient. The sequence is that of NAD(P)H-quinone oxidoreductase subunit K, chloroplastic from Staurastrum punctulatum (Green alga).